Reading from the N-terminus, the 360-residue chain is 3-dehydroquinate synthase (360 aa).

NAD(+) is bound by residues 70 to 75, 128 to 129, lysine 141, and lysine 150; these read DGESLK and TT. Residues glutamate 182, histidine 243, and histidine 259 each contribute to the Zn(2+) site.

The protein belongs to the sugar phosphate cyclases superfamily. Dehydroquinate synthase family. Requires NAD(+) as cofactor. Co(2+) is required as a cofactor. Zn(2+) serves as cofactor.

The protein resides in the cytoplasm. It catalyses the reaction 7-phospho-2-dehydro-3-deoxy-D-arabino-heptonate = 3-dehydroquinate + phosphate. It functions in the pathway metabolic intermediate biosynthesis; chorismate biosynthesis; chorismate from D-erythrose 4-phosphate and phosphoenolpyruvate: step 2/7. Catalyzes the conversion of 3-deoxy-D-arabino-heptulosonate 7-phosphate (DAHP) to dehydroquinate (DHQ). The polypeptide is 3-dehydroquinate synthase (Thermoplasma volcanium (strain ATCC 51530 / DSM 4299 / JCM 9571 / NBRC 15438 / GSS1)).